The sequence spans 458 residues: F-box/LRR-repeat protein At5g02910 (458 aa).

The region spanning 10–56 (MDFISSLPDEILHHILSSVPTKSAIRTSLLSKRWRYVWSETPSLSID) is the F-box domain. 8 LRR repeats span residues 57-84 (CRRADPNSIDKTLSFFSAPKITSFHLHT), 86-112 (LLNRIDSVNGCIEFAISHNAEKLSLES), 133-161 (KQLFVDSGSVHLIPRCTVSWTSLKNLSLS), 162-187 (NCTLSDESFLKILSGSPLLESLELLY), 226-251 (CLRLRHSRLPCSLVDVSSLTEADLNI), 260-285 (TAGFLQHNVVKMLQMLQNVEKLTIGG), 325-353 (KLLRYTPGLRKLTIHTVKCSSISELHLND), and 389-414 (ESNLVALFMERLLKSTKSLETMVVLL).

The chain is F-box/LRR-repeat protein At5g02910 from Arabidopsis thaliana (Mouse-ear cress).